The sequence spans 689 residues: Protein asunder (689 aa).

Residues 521–550 (NGARLKLSKAKDQYRLLYRELEQLIQLNAT) are a coiled coil. Disordered regions lie at residues 591-619 (SPER…SKRR) and 665-689 (GTKD…SVRS). The segment covering 599-614 (SSVGASGSSNSNSLLK) has biased composition (low complexity). The Nuclear localization signal (NLS) motif lies at 613 to 619 (LKASKRR).

Belongs to the Integrator subunit 13 family. As to quaternary structure, belongs to the multiprotein complex Integrator, at least composed of IntS1, IntS2, IntS3, IntS4, omd/IntS5, IntS6, defl/IntS7, IntS8, IntS9, IntS10, IntS11, IntS12, asun/IntS13, IntS14 and IntS15. The core complex associates with protein phosphatase 2A subunits mts/PP2A and Pp2A-29B, to form the Integrator-PP2A (INTAC) complex. In terms of processing, phosphorylated.

The protein localises to the nucleus. The protein resides in the cytoplasm. It is found in the perinuclear region. Functionally, component of the integrator complex, a multiprotein complex that terminates RNA polymerase II (Pol II) transcription in the promoter-proximal region of genes. The integrator complex provides a quality checkpoint during transcription elongation by driving premature transcription termination of transcripts that are unfavorably configured for transcriptional elongation: the complex terminates transcription by (1) catalyzing dephosphorylation of the C-terminal domain (CTD) of Pol II subunit Polr2A/Rbp1 and Spt5, and (2) degrading the exiting nascent RNA transcript via endonuclease activity. The integrator complex is also involved in the 3'-end processing of the U7 snRNA, and also the spliceosomal snRNAs U1, U2, U4 and U5. This Drosophila sechellia (Fruit fly) protein is Protein asunder (asun).